Here is a 193-residue protein sequence, read N- to C-terminus: Peptidyl-tRNA hydrolase (193 aa).

TRNA is bound at residue Tyr-16. His-21 (proton acceptor) is an active-site residue. TRNA is bound by residues Phe-66, Asn-68, and Asn-114.

This sequence belongs to the PTH family. As to quaternary structure, monomer.

It is found in the cytoplasm. It carries out the reaction an N-acyl-L-alpha-aminoacyl-tRNA + H2O = an N-acyl-L-amino acid + a tRNA + H(+). In terms of biological role, hydrolyzes ribosome-free peptidyl-tRNAs (with 1 or more amino acids incorporated), which drop off the ribosome during protein synthesis, or as a result of ribosome stalling. Its function is as follows. Catalyzes the release of premature peptidyl moieties from peptidyl-tRNA molecules trapped in stalled 50S ribosomal subunits, and thus maintains levels of free tRNAs and 50S ribosomes. The sequence is that of Peptidyl-tRNA hydrolase from Pelobacter propionicus (strain DSM 2379 / NBRC 103807 / OttBd1).